We begin with the raw amino-acid sequence, 142 residues long: Large ribosomal subunit protein bL17 (142 aa).

This sequence belongs to the bacterial ribosomal protein bL17 family. Part of the 50S ribosomal subunit. Contacts protein L32.

The polypeptide is Large ribosomal subunit protein bL17 (Wolbachia pipientis subsp. Culex pipiens (strain wPip)).